We begin with the raw amino-acid sequence, 202 residues long: Small ribosomal subunit protein uS4 (202 aa).

In terms of domain architecture, S4 RNA-binding spans 90–152 (MRLDNTVFRL…ERSRRLVETN (63 aa)).

Belongs to the universal ribosomal protein uS4 family. As to quaternary structure, part of the 30S ribosomal subunit. Contacts protein S5. The interaction surface between S4 and S5 is involved in control of translational fidelity.

Its function is as follows. One of the primary rRNA binding proteins, it binds directly to 16S rRNA where it nucleates assembly of the body of the 30S subunit. In terms of biological role, with S5 and S12 plays an important role in translational accuracy. The chain is Small ribosomal subunit protein uS4 from Thermosynechococcus vestitus (strain NIES-2133 / IAM M-273 / BP-1).